A 129-amino-acid chain; its full sequence is Ig kappa chain V-IV region S107B (129 aa).

The first 22 residues, 1 to 22, serve as a signal peptide directing secretion; that stretch reads MDLQVQIIXFLLISVTVIMSRG. The interval 23–45 is framework-1; that stretch reads ENVLTQSPAIMAASLGQKVTMTC. C45 and C111 are disulfide-bonded. The tract at residues 46–57 is complementarity-determining-1; it reads SASSSVSSSYLH. Positions 58-72 are framework-2; the sequence is WYQQKSGASPKPLIH. The segment at 73-79 is complementarity-determining-2; sequence RTSNLAS. The framework-3 stretch occupies residues 80–111; sequence GVPARFSGSGSGTSYSLTISSVEAEDDATYYC. The tract at residues 112–118 is complementarity-determining-3; sequence QQWSGYP. Residues 119–128 are framework-4; the sequence is FGSGTKLEIK.

This Mus musculus (Mouse) protein is Ig kappa chain V-IV region S107B.